Here is a 197-residue protein sequence, read N- to C-terminus: GTP cyclohydrolase 1 (197 aa).

Positions 88, 91, and 160 each coordinate Zn(2+).

The protein belongs to the GTP cyclohydrolase I family. Homomer.

It catalyses the reaction GTP + H2O = 7,8-dihydroneopterin 3'-triphosphate + formate + H(+). It functions in the pathway cofactor biosynthesis; 7,8-dihydroneopterin triphosphate biosynthesis; 7,8-dihydroneopterin triphosphate from GTP: step 1/1. In Clostridium beijerinckii (strain ATCC 51743 / NCIMB 8052) (Clostridium acetobutylicum), this protein is GTP cyclohydrolase 1.